A 201-amino-acid chain; its full sequence is FMN-dependent NADH:quinone oxidoreductase (201 aa).

Residues S10, S16–S18, M96–F99, and S140–G143 each bind FMN.

The protein belongs to the azoreductase type 1 family. In terms of assembly, homodimer. It depends on FMN as a cofactor.

The catalysed reaction is 2 a quinone + NADH + H(+) = 2 a 1,4-benzosemiquinone + NAD(+). It carries out the reaction N,N-dimethyl-1,4-phenylenediamine + anthranilate + 2 NAD(+) = 2-(4-dimethylaminophenyl)diazenylbenzoate + 2 NADH + 2 H(+). Quinone reductase that provides resistance to thiol-specific stress caused by electrophilic quinones. Its function is as follows. Also exhibits azoreductase activity. Catalyzes the reductive cleavage of the azo bond in aromatic azo compounds to the corresponding amines. The chain is FMN-dependent NADH:quinone oxidoreductase from Yersinia pseudotuberculosis serotype O:1b (strain IP 31758).